Consider the following 396-residue polypeptide: Argininosuccinate synthase (396 aa).

Residue 6 to 14 (AYSGGLDTS) coordinates ATP. Residue Tyr-83 participates in L-citrulline binding. Gly-113 serves as a coordination point for ATP. The L-aspartate site is built by Thr-115, Asn-119, and Asp-120. L-citrulline is bound at residue Asn-119. L-citrulline-binding residues include Arg-123, Ser-171, Ser-180, Glu-256, and Tyr-268.

This sequence belongs to the argininosuccinate synthase family. Type 1 subfamily. Homotetramer.

It localises to the cytoplasm. It carries out the reaction L-citrulline + L-aspartate + ATP = 2-(N(omega)-L-arginino)succinate + AMP + diphosphate + H(+). The protein operates within amino-acid biosynthesis; L-arginine biosynthesis; L-arginine from L-ornithine and carbamoyl phosphate: step 2/3. This chain is Argininosuccinate synthase, found in Hyperthermus butylicus (strain DSM 5456 / JCM 9403 / PLM1-5).